Consider the following 282-residue polypeptide: Undecaprenyl-diphosphatase (282 aa).

7 helical membrane passes run 40 to 60 (GAAF…MYFW), 85 to 105 (ARMG…GLLF), 115 to 135 (SLYW…LAEW), 153 to 173 (IGWK…IPGS), 193 to 213 (AARF…IFQL), 230 to 250 (LAAA…FLLS), and 258 to 278 (TIFI…LSTG).

Belongs to the UppP family.

The protein localises to the cell inner membrane. It carries out the reaction di-trans,octa-cis-undecaprenyl diphosphate + H2O = di-trans,octa-cis-undecaprenyl phosphate + phosphate + H(+). Its function is as follows. Catalyzes the dephosphorylation of undecaprenyl diphosphate (UPP). Confers resistance to bacitracin. This is Undecaprenyl-diphosphatase from Chlorobium phaeovibrioides (strain DSM 265 / 1930) (Prosthecochloris vibrioformis (strain DSM 265)).